Reading from the N-terminus, the 615-residue chain is TANK-binding kinase 1-binding protein 1 (615 aa).

The tract at residues 1 to 279 is homodimerization; the sequence is MESMFEDDIS…QDLASNQSER (279 aa). The stretch at 48–162 forms a coiled coil; that stretch reads YGDIKERLGG…ALVETHLRQI (115 aa). Ser-184 bears the Phosphoserine mark. Residues 221 to 276 adopt a coiled-coil conformation; sequence VSDLERRRLEEALEAAQGEARGAQLREEQLQAECERLQGELKQLQETRAQDLASNQ. Residues 280–329 are interaction with TBK1 and IKBKE; the sequence is DMAWVKRVGDDQVNLALAYTELTEELGRLRELSSLQGRILRTLLQEQARS. Residues 326–458 are disordered; sequence QARSGGQRHS…SHHVKAGFQG (133 aa). Positions 345-365 are enriched in pro residues; the sequence is PQCPSPSPPARAAPPCPPCQS. A phosphoserine mark is found at Ser-365, Ser-372, Ser-379, Ser-385, Ser-400, and Ser-415. Over residues 389–406 the composition is skewed to pro residues; it reads PSCPSPVPQRRSPVPPSC. A compositionally biased stretch (pro residues) spans 416 to 435; that stretch reads PVPPSCPAPQPRPPPPPPPG. A phosphoserine mark is found at Ser-504 and Ser-534. The UBZ1-type zinc-finger motif lies at 583–609; sequence IRSCPLCQLGFPVGYPDDALIKHIDSH. Zn(2+) is bound by residues Cys-586, Cys-589, His-605, and His-609.

Homodimer. May form a heterodimer with NAP1. Interacts with TKB1 and IKBKE. Weakly interacts with DDX3X. As to quaternary structure, (Microbial infection) Interacts with vaccinia virus protein C6. Detected in leukocytes, lung, placenta, small intestine, liver, kidney, spleen, muscle, heart, brain and at low levels in thymus.

In terms of biological role, adapter protein which constitutively binds TBK1 and IKBKE playing a role in antiviral innate immunity. The chain is TANK-binding kinase 1-binding protein 1 from Homo sapiens (Human).